Consider the following 708-residue polypeptide: Fatty acid oxidation complex subunit alpha (708 aa).

The enoyl-CoA hydratase stretch occupies residues 1–190; sequence MSQDKAFTME…KAGLVTEVVP (190 aa). The interval 310-708 is 3-hydroxyacyl-CoA dehydrogenase; sequence DSVKRVGVLG…MLENGWNFYQ (399 aa).

This sequence in the N-terminal section; belongs to the enoyl-CoA hydratase/isomerase family. The protein in the central section; belongs to the 3-hydroxyacyl-CoA dehydrogenase family. Heterotetramer of two alpha chains (FadJ) and two beta chains (FadI).

Its subcellular location is the cytoplasm. It catalyses the reaction a (3S)-3-hydroxyacyl-CoA = a (2E)-enoyl-CoA + H2O. The catalysed reaction is a 4-saturated-(3S)-3-hydroxyacyl-CoA = a (3E)-enoyl-CoA + H2O. It carries out the reaction a (3S)-3-hydroxyacyl-CoA + NAD(+) = a 3-oxoacyl-CoA + NADH + H(+). The enzyme catalyses (3S)-3-hydroxybutanoyl-CoA = (3R)-3-hydroxybutanoyl-CoA. The protein operates within lipid metabolism; fatty acid beta-oxidation. Catalyzes the formation of a hydroxyacyl-CoA by addition of water on enoyl-CoA. Also exhibits 3-hydroxyacyl-CoA epimerase and 3-hydroxyacyl-CoA dehydrogenase activities. The protein is Fatty acid oxidation complex subunit alpha of Idiomarina loihiensis (strain ATCC BAA-735 / DSM 15497 / L2-TR).